Here is a 198-residue protein sequence, read N- to C-terminus: V-type ATP synthase subunit E (198 aa).

It belongs to the V-ATPase E subunit family.

Its function is as follows. Produces ATP from ADP in the presence of a proton gradient across the membrane. The protein is V-type ATP synthase subunit E of Clostridium novyi (strain NT).